Consider the following 146-residue polypeptide: Cell division protein SepF (146 aa).

The protein belongs to the SepF family. As to quaternary structure, homodimer. Interacts with FtsZ.

The protein localises to the cytoplasm. Cell division protein that is part of the divisome complex and is recruited early to the Z-ring. Probably stimulates Z-ring formation, perhaps through the cross-linking of FtsZ protofilaments. Its function overlaps with FtsA. The polypeptide is Cell division protein SepF (Alkaliphilus oremlandii (strain OhILAs) (Clostridium oremlandii (strain OhILAs))).